The chain runs to 1337 residues: MAPVLHFYVRPSGHEGAASGRVFRRLQEKLPTLQSVETELCYNVHWAAETLPWAEEMKKLMWLFGCPLVRDDVAQEPWLVPGSNDLLLEVGPRLNFSTPASTNIVSVCQAAGLRAVDRVETTRRYRLSFTDHPTAEMEAISLAALHDRMTEQHYPDPIQSFSPQSIPAPLKGSIDILAEGRPALEKANQELGLALDSWDLDFYTKRFQELQRNPSTVEVFDLAQSNSEHSRHWFFKGQLHVDGKKLAHSLFESIMSTQASSNPNNVLKFCDNSSAIQGKKVKFLRPEDSTRPSCFQQQQGLRHVVFTAETHNFPTGVAPFSGATTGTGGRIRDVQCTGRGAHVVAGTAGYCFGNLHIPDYNLPWEDPSFQYPGNFARPLEVAIEASNGASDYGNKFGEPVLAGFARSLGLQLPDGQRREWIKPIMFSGGIGSMEAKHVGKKPPEPGMEVVKVGGPVYRIGVGGGAASSVQVQGDNTSDLDFGAVQRGDPEMEQKMNRVIRACVEAPGGNPICSLHDQGAGGNGNVLKELSDPEGAIIYTSRFQLGDPTLNALEIWGAEYQESNALLLRPSDRDFLSRASARERCPACFVGTITGDKRIVLVDDRECLVGKTGQGDAPLTPPTPVDLDLDWVLGKMPQKEFFLQRKPPVLQPLALPPELSVRQALNRVLRLPAVASKRYLTNKVDRSVGGLVAQQQCVGPLQTPLADVAVVALSHQECIGAATALGEQPVKSLLDPKAAARLAVSEALTNLVFALVTDLRDVKCSGNWMWAAKLPGEGAALADACEAMVAVMAALGVAVDGGKDSLSMAARVGTETVQAPGSLVISAYAVCPDITATVTPDLKHPGGKGHLLYVPLSPGQHRLGGTALAQCFSQLGEHPPDLDLPENLVRAFHITQGLLKECRLCSGHDVSDGGLVTCLLEMAFAGNCGIEVDVPAPGIHALPVLFAEEPGLVLEVQEADVAGVRQRYESAGLRCLELGHTGEAGPQAMARISVNKAVVVEEPVGELRALWEETSFQLDLLQAEPRCVIEEKQGLKERTGPSYYLPPTFPVASVPCKPGGPVPRVAILREEGSNGDREMADAFHLAGFEVWDVTMQDLCSGAIRLDTFRGVAFVGGFSYADVLGSAKGWAAAVTFNPQAREELGRFRRRPDTFSLGVCNGCQLLALLGWVGSDPSEEQAEPGQDSQPTQPGLLLRHNLSGRFESRWATVRVEPGPALMLRGMEGSVLPVWSAHGEGYMAFSSPELQAKIEAKGLVPLHWADDDGNPTEQYPLNPNGSPGGIAGICSQDGRHLALMPHPERAVRLWQWAWRPSPFDVLPTSPWLQLFINARNWTQEDSC.

At S215 the chain carries Phosphoserine. Residues 322 to 333 (GATTGTGGRIRD) and 402 to 404 (AGF) contribute to the ATP site. Residues T619 and T622 each carry the phosphothreonine modification. Residue A705 participates in ATP binding. Residues D706, E745, N749, and D908 each coordinate Mg(2+). S910 serves as a coordination point for ATP. Positions 1063-1301 (RVAILREEGS…ALMPHPERAV (239 aa)) constitute a Glutamine amidotransferase type-1 domain. C1157 serves as the catalytic Nucleophile. Active-site residues include H1296 and E1298.

This sequence in the N-terminal section; belongs to the FGAMS family.

The protein resides in the cytoplasm. It carries out the reaction N(2)-formyl-N(1)-(5-phospho-beta-D-ribosyl)glycinamide + L-glutamine + ATP + H2O = 2-formamido-N(1)-(5-O-phospho-beta-D-ribosyl)acetamidine + L-glutamate + ADP + phosphate + H(+). It functions in the pathway purine metabolism; IMP biosynthesis via de novo pathway; 5-amino-1-(5-phospho-D-ribosyl)imidazole from N(2)-formyl-N(1)-(5-phospho-D-ribosyl)glycinamide: step 1/2. In terms of biological role, phosphoribosylformylglycinamidine synthase involved in the purines biosynthetic pathway. Catalyzes the ATP-dependent conversion of formylglycinamide ribonucleotide (FGAR) and glutamine to yield formylglycinamidine ribonucleotide (FGAM) and glutamate. This chain is Phosphoribosylformylglycinamidine synthase (Pfas), found in Mus musculus (Mouse).